Reading from the N-terminus, the 120-residue chain is MRVKGGSVTRQRRKRWLEKAEGSWGTRNTSYRIARQTVIRAAEYAYRDRRNKKRDFRKLWISRINAAVRELGYTYSQFMNALVKANVVTKDGQGLNRKMLSELAINNPEAFNQLVDKVMK.

Belongs to the bacterial ribosomal protein bL20 family.

Functionally, binds directly to 23S ribosomal RNA and is necessary for the in vitro assembly process of the 50S ribosomal subunit. It is not involved in the protein synthesizing functions of that subunit. The polypeptide is Large ribosomal subunit protein bL20 (Ureaplasma parvum serovar 3 (strain ATCC 27815 / 27 / NCTC 11736)).